The chain runs to 1109 residues: Cation channel sperm-associated auxiliary subunit beta (1109 aa).

The Extracellular segment spans residues methionine 1–proline 1055. A disulfide bridge links cysteine 35 with cysteine 60. Residues asparagine 66, asparagine 90, and asparagine 118 are each glycosylated (N-linked (GlcNAc...) asparagine). Cysteine 189 and cysteine 302 are joined by a disulfide. N-linked (GlcNAc...) asparagine glycosylation is present at asparagine 321. Cysteine 330 and cysteine 343 are disulfide-bonded. The N-linked (GlcNAc...) asparagine glycan is linked to asparagine 672. 4 disulfide bridges follow: cysteine 720/cysteine 818, cysteine 831/cysteine 1039, cysteine 913/cysteine 922, and cysteine 924/cysteine 939. N-linked (GlcNAc...) asparagine glycans are attached at residues asparagine 915 and asparagine 923. A glycan (N-linked (GlcNAc...) asparagine) is linked at asparagine 1017. Residues phenylalanine 1056 to phenylalanine 1078 traverse the membrane as a helical segment. The Cytoplasmic segment spans residues valine 1079–serine 1109.

As to quaternary structure, component of the CatSper complex or CatSpermasome composed of the core pore-forming members CATSPER1, CATSPER2, CATSPER3 and CATSPER4 as well as auxiliary members CATSPERB, CATSPERG2, CATSPERD, CATSPERE, CATSPERZ, C2CD6/CATSPERT, SLCO6C1, TMEM249, TMEM262 and EFCAB9. HSPA1 may be an additional auxiliary complex member. The core complex members CATSPER1, CATSPER2, CATSPER3 and CATSPER4 form a heterotetrameric channel. The auxiliary CATSPERB, CATSPERG2, CATSPERD and CATSPERE subunits form a pavilion-like structure over the pore which stabilizes the complex through interactions with CATSPER4, CATSPER3, CATSPER1 and CATSPER2 respectively. SLCO6C1 interacts with CATSPERE and TMEM262/CATSPERH interacts with CATSPERB, further stabilizing the complex. C2CD6/CATSPERT interacts at least with CATSPERD and is required for targeting the CatSper complex in the flagellar membrane. As to expression, testis-specific. Specifically present in the principal piece of sperm tail (at protein level). Specifically expressed in the seminiferous tubules but not in the interstitial cells. Within the tubules, it is expressed in spermatocytes and spermatids, but not in spermatogonia.

The protein localises to the cell projection. The protein resides in the cilium. Its subcellular location is the flagellum membrane. In terms of biological role, auxiliary component of the CatSper complex, a complex involved in sperm cell hyperactivation. Sperm cell hyperactivation is needed for sperm motility which is essential late in the preparation of sperm for fertilization. This is Cation channel sperm-associated auxiliary subunit beta from Mus musculus (Mouse).